The chain runs to 172 residues: Iron-sulfur cluster assembly protein SufA (172 aa).

A signal peptide spans 1-19; it reads MFINIFLFLFAATINISSS. [4Fe-4S] cluster contacts are provided by Cys-96, Cys-164, and Cys-166.

It belongs to the HesB/IscA family. As to quaternary structure, homodimer.

The protein localises to the plastid. It localises to the apicoplast. It functions in the pathway cofactor biosynthesis; iron-sulfur cluster biosynthesis. Participates in the sulfur mobilization (SUF) pathway for iron-sulfur (Fe-S) cluster biogenesis. Involved in the pre-assembly of [4Fe-4S] clusters and their transfer to target proteins. The protein is Iron-sulfur cluster assembly protein SufA of Plasmodium berghei (strain Anka).